A 742-amino-acid chain; its full sequence is Probable LRR receptor-like serine/threonine-protein kinase At2g02780 (742 aa).

The N-terminal stretch at M1–S25 is a signal peptide. At E26 to L354 the chain is on the extracellular side. LRR repeat units follow at residues H74–K96, L104–K128, S130–L154, N156–G177, L178–T204, S206–L223, N224–I247, S249–S271, and K273–S294. An N-linked (GlcNAc...) asparagine glycan is attached at N85. The N-linked (GlcNAc...) asparagine glycan is linked to N137. N209 is a glycosylation site (N-linked (GlcNAc...) asparagine). N266 is a glycosylation site (N-linked (GlcNAc...) asparagine). An N-linked (GlcNAc...) asparagine glycan is attached at N299. Residues V355–I375 traverse the membrane as a helical segment. Residues A376–E742 lie on the Cytoplasmic side of the membrane. Positions D386–P424 are disordered. Residues V406–L417 are compositionally biased toward polar residues. In terms of domain architecture, Protein kinase spans T426 to I720.

It belongs to the protein kinase superfamily. Ser/Thr protein kinase family.

The protein resides in the membrane. It catalyses the reaction L-seryl-[protein] + ATP = O-phospho-L-seryl-[protein] + ADP + H(+). The catalysed reaction is L-threonyl-[protein] + ATP = O-phospho-L-threonyl-[protein] + ADP + H(+). The polypeptide is Probable LRR receptor-like serine/threonine-protein kinase At2g02780 (Arabidopsis thaliana (Mouse-ear cress)).